The primary structure comprises 67 residues: Medusin-H1 (67 aa).

Residues 1–22 (MDFLKKSLFLVLFLGFFSLSIC) form the signal peptide. Residues 23-48 (EEEKRETEEKENEQEDDREERREEKR) constitute a propeptide that is removed on maturation. Positions 24–46 (EEKRETEEKENEQEDDREERREE) are disordered. Over residues 31-40 (EKENEQEDDR) the composition is skewed to acidic residues. Leucine 66 carries the post-translational modification Leucine amide.

This sequence belongs to the frog skin active peptide (FSAP) family. Medusin subfamily. In terms of tissue distribution, expressed by the skin glands.

It localises to the secreted. Functionally, antimicrobial peptide with activity against Gram-positive bacteria (S.aureus, MIC=32 mg/L) and fungi (C.albicans, MIC=128 mg/L). Shows weak hemolytic activity. This Pithecopus hypochondrialis (Orange-legged leaf frog) protein is Medusin-H1.